We begin with the raw amino-acid sequence, 39 residues long: B melanoma antigen 4 (39 aa).

Residues 1-17 (MAAGAVFLALSAQLLQA) form the signal peptide.

This sequence belongs to the BAGE family. As to expression, not expressed in normal tissues except in testis. Expressed in melanoma, bladder and lung carcinomas.

It localises to the secreted. In terms of biological role, unknown. Candidate gene encoding tumor antigens. This Homo sapiens (Human) protein is B melanoma antigen 4 (BAGE4).